We begin with the raw amino-acid sequence, 432 residues long: 3-phosphoshikimate 1-carboxyvinyltransferase (432 aa).

Positions 22, 23, and 27 each coordinate 3-phosphoshikimate. Residue Lys22 coordinates phosphoenolpyruvate. Phosphoenolpyruvate is bound by residues Gly96 and Arg127. Positions 173, 174, 175, 201, 317, 340, and 344 each coordinate 3-phosphoshikimate. Gln175 lines the phosphoenolpyruvate pocket. The active-site Proton acceptor is the Asp317. 3 residues coordinate phosphoenolpyruvate: Arg348, Arg392, and Lys417.

The protein belongs to the EPSP synthase family. In terms of assembly, monomer.

It is found in the cytoplasm. The catalysed reaction is 3-phosphoshikimate + phosphoenolpyruvate = 5-O-(1-carboxyvinyl)-3-phosphoshikimate + phosphate. The protein operates within metabolic intermediate biosynthesis; chorismate biosynthesis; chorismate from D-erythrose 4-phosphate and phosphoenolpyruvate: step 6/7. Catalyzes the transfer of the enolpyruvyl moiety of phosphoenolpyruvate (PEP) to the 5-hydroxyl of shikimate-3-phosphate (S3P) to produce enolpyruvyl shikimate-3-phosphate and inorganic phosphate. The protein is 3-phosphoshikimate 1-carboxyvinyltransferase of Mannheimia haemolytica (Pasteurella haemolytica).